The primary structure comprises 210 residues: Pyrrolidone-carboxylate peptidase (210 aa).

Residues Glu80, Cys143, and His162 contribute to the active site.

This sequence belongs to the peptidase C15 family. In terms of assembly, homotetramer.

Its subcellular location is the cytoplasm. The catalysed reaction is Release of an N-terminal pyroglutamyl group from a polypeptide, the second amino acid generally not being Pro.. In terms of biological role, removes 5-oxoproline from various penultimate amino acid residues except L-proline. The protein is Pyrrolidone-carboxylate peptidase of Chromobacterium violaceum (strain ATCC 12472 / DSM 30191 / JCM 1249 / CCUG 213 / NBRC 12614 / NCIMB 9131 / NCTC 9757 / MK).